An 852-amino-acid chain; its full sequence is Potassium voltage-gated channel subfamily KQT member 2 (852 aa).

The Cytoplasmic segment spans residues 1–90; it reads MVQKSRNGGV…LYNVLERPRG (90 aa). The residue at position 52 (S52) is a Phosphoserine; by PKA. A helical membrane pass occupies residues 91–113; that stretch reads WAFIYHAYVFLLVFSCLVLSVFS. Topologically, residues 114–123 are extracellular; it reads TIKEYEKSSE. A helical transmembrane segment spans residues 124 to 145; that stretch reads GALYILEIVTIVVFGVEYFVRI. Over 146–163 the chain is Cytoplasmic; sequence WAAGCCCRYRGWRGRLKF. A helical membrane pass occupies residues 164–183; that stretch reads ARKPFCVIDIMVLIASIAVL. Residues 184–196 are Extracellular-facing; it reads AAGSQGNVFATSA. Residues 197–215 form a helical; Voltage-sensor membrane-spanning segment; the sequence is LRSLRFLQILRMIRMDRRG. R214 serves as a coordination point for a 1,2-diacyl-sn-glycero-3-phospho-(1D-myo-inositol-4,5-bisphosphate). The Cytoplasmic portion of the chain corresponds to 216 to 227; sequence GTWKLLGSVVYA. The tract at residues 222–323 is mediates interaction with SLC5A3; it reads GSVVYAHSKE…SGFALKVQEQ (102 aa). A helical membrane pass occupies residues 228 to 253; that stretch reads HSKELVTAWYIGFLCLILASFLVYLA. K230 is an a 1,2-diacyl-sn-glycero-3-phospho-(1D-myo-inositol-4,5-bisphosphate) binding site. Residues 254 to 263 lie on the Extracellular side of the membrane; sequence EKGENDHFDT. The pore-forming intramembrane region spans 264–276; that stretch reads YADALWWGLITLT. The Selectivity filter motif lies at 277–282; that stretch reads TIGYGD. Residues 277-287 are Extracellular-facing; the sequence is TIGYGDKYPQT. The helical transmembrane segment at 288–314 threads the bilayer; the sequence is WNGRLLAATFTLIGVSFFALPAGILGS. Residues 315–852 are Cytoplasmic-facing; it reads GFALKVQEQH…GDVAWAGPRK (538 aa). Positions 317–522 are mediates interaction with calmodulin; it reads ALKVQEQHRQ…EDLTPGLKVS (206 aa). Position 327 (K327) interacts with a 1,2-diacyl-sn-glycero-3-phospho-(1D-myo-inositol-4,5-bisphosphate). The segment at 404–469 is disordered; the sequence is TFRKEPQPEP…SKVPKSWSFG (66 aa). The segment covering 440-457 has biased composition (polar residues); sequence PQAQTVRRSPSADQSLDD. S448, S450, S454, S458, S460, and S489 each carry phosphoserine. Disordered regions lie at residues 579 to 601, 643 to 662, and 672 to 718; these read GPTI…EDPS, GAKE…SRDH, and IVRS…DHGS. Residues 583–592 show a composition bias toward basic and acidic residues; the sequence is TDKDRTKGPA. Residue S655 is modified to Phosphoserine. S781 and S783 each carry phosphoserine. Positions 818–852 are disordered; sequence ESDTDSDLCTPCGPPPRSATGEGPFGDVAWAGPRK.

Belongs to the potassium channel family. KQT (TC 1.A.1.15) subfamily. Kv7.2/KCNQ2 sub-subfamily. Heterotetramer with KCNQ3; forms heterotetrameric M-channel responsible for the M-current. Homotetrameric; forms a functional homotetrameric channel resulting in the expression of a small M-current. Interacts with calmodulin; the interaction is calcium-independent, constitutive and participates in the proper assembly of a functional M-channel. May associate with KCNE2. Interacts with IQCJ-SCHIP1. Interacts (via the pore module) with SLC5A3/SMIT1; forms a coregulatory complex that alters ion selectivity, voltage dependence and gating kinetics of the channel. Interacts with AKAP5; the interaction may help KCNQ2 channel complex to retain calcium-bound calmodulin. Post-translationally, KCNQ2/KCNQ3 heteromeric current can be increased by intracellular cyclic AMP, an effect that depends on phosphorylation of Ser-52 in the N-terminal region. In terms of processing, KCNQ2/KCNQ3 are ubiquitinated by NEDD4L. Ubiquitination leads to protein degradation. Degradation induced by NEDD4L is inhibited by USP36. As to expression, expressed in brain and sympathetic ganglia. In brain, expressed in cortex, hippocampus, and cerebellum. In sympathetic ganglia, expressed at lower levels in celiac ganglia and superior mesenteric ganglia than in superior cervical ganglia.

The protein localises to the cell membrane. The catalysed reaction is K(+)(in) = K(+)(out). It catalyses the reaction Rb(+)(in) = Rb(+)(out). It carries out the reaction Cs(+)(in) = Cs(+)(out). The enzyme catalyses Na(+)(in) = Na(+)(out). With respect to regulation, phosphatidylinositol-4,5-bisphosphate (PIP2) potentiates the activation of KCNQ channels by enhancing the electro-mechanical coupling of the voltage-sensing domain (VSD) and the pore-forming domain (PD). In the closed state of the channel, PIP2 is anchored at the S2-S3 loop; upon channel activation, PIP2 interacts with the S4-S5 linker and is involved in channel gating. Calcium suppresses KCNQ2 and KCNQ2-KCNQ3 channel currents, with calcium-bound calmodulin inducing a change in channel configuration which leads to the reduction of channel affinity for PIP2 and subsequent current suppression. In terms of biological role, pore-forming subunit of the voltage-gated potassium (Kv) M-channel which is responsible for the M-current, a key controller of neuronal excitability. M-channel is composed of pore-forming subunits KCNQ2 and KCNQ3 assembled as heterotetramers. The native M-current has a slowly activating and deactivating potassium conductance which plays a critical role in determining the subthreshold electrical excitability of neurons as well as the responsiveness to synaptic inputs. M-channel is selectively permeable in vitro to other cations besides potassium, in decreasing order of affinity K(+) &gt; Rb(+) &gt; Cs(+) &gt; Na(+). M-channel association with SLC5A3/SMIT1 alters channel ion selectivity, increasing Na(+) and Cs(+) permeation relative to K(+). Suppressed by activation of the muscarinic acetylcholine receptor CHRM1. The sequence is that of Potassium voltage-gated channel subfamily KQT member 2 from Rattus norvegicus (Rat).